Here is a 350-residue protein sequence, read N- to C-terminus: TLC domain-containing protein fld-1 (350 aa).

The helical transmembrane segment at 9–29 (TDLLGPVPTMFLWVIVSFAFF) threads the bilayer. Positions 65 to 100 (GQEAENTENPPENEAEAGEQVEQEPEPDSRDLSAIP) are disordered. The segment covering 75–90 (PENEAEAGEQVEQEPE) has biased composition (acidic residues). The TLC domain maps to 102-279 (NKKWRISNEC…IINGLVIASL (178 aa)). Transmembrane regions (helical) follow at residues 111–131 (CVSL…LLYY), 145–165 (VAIN…VDLL), 173–193 (IIEL…TMFF), 195–215 (RFLG…FLHS), 229–249 (PSFR…RLCV), and 270–292 (IING…RLLA).

Ubiquitously expressed.

It localises to the cell membrane. In terms of biological role, regulates the composition and fluidity of the plasma membrane. Inhibits the incorporation of membrane-fluidizing phospholipids containing omega-3 long-chain polyunsaturated fatty acids (LCPUFA) and thereby promotes membrane rigidity. Does not appear to have any effect on LCPUFA synthesis. The protein is TLC domain-containing protein fld-1 of Caenorhabditis elegans.